The primary structure comprises 343 residues: 3-dehydroquinate synthase (343 aa).

NAD(+)-binding positions include 61-66 (SGEKYK), 95-99 (GVISD), 119-120 (TT), Lys-132, Lys-141, and 159-162 (FLKT). Glu-174, His-231, and His-248 together coordinate Zn(2+).

Belongs to the sugar phosphate cyclases superfamily. Dehydroquinate synthase family. Requires Co(2+) as cofactor. It depends on Zn(2+) as a cofactor. NAD(+) serves as cofactor.

The protein resides in the cytoplasm. It catalyses the reaction 7-phospho-2-dehydro-3-deoxy-D-arabino-heptonate = 3-dehydroquinate + phosphate. It functions in the pathway metabolic intermediate biosynthesis; chorismate biosynthesis; chorismate from D-erythrose 4-phosphate and phosphoenolpyruvate: step 2/7. Its function is as follows. Catalyzes the conversion of 3-deoxy-D-arabino-heptulosonate 7-phosphate (DAHP) to dehydroquinate (DHQ). This chain is 3-dehydroquinate synthase, found in Helicobacter pylori (strain P12).